The following is a 250-amino-acid chain: Ribonuclease PH (250 aa).

Phosphate contacts are provided by residues Arg87 and 125–127 (GTR).

The protein belongs to the RNase PH family. As to quaternary structure, homohexameric ring arranged as a trimer of dimers.

It catalyses the reaction tRNA(n+1) + phosphate = tRNA(n) + a ribonucleoside 5'-diphosphate. Its function is as follows. Phosphorolytic 3'-5' exoribonuclease that plays an important role in tRNA 3'-end maturation. Removes nucleotide residues following the 3'-CCA terminus of tRNAs; can also add nucleotides to the ends of RNA molecules by using nucleoside diphosphates as substrates, but this may not be physiologically important. Probably plays a role in initiation of 16S rRNA degradation (leading to ribosome degradation) during starvation. The sequence is that of Ribonuclease PH from Moorella thermoacetica (strain ATCC 39073 / JCM 9320).